Consider the following 288-residue polypeptide: Nucleotide-binding protein Gura_2968 (288 aa).

8 to 15 serves as a coordination point for ATP; sequence GLSGSGKS. 59 to 62 provides a ligand contact to GTP; the sequence is DIRG.

The protein belongs to the RapZ-like family.

Functionally, displays ATPase and GTPase activities. The sequence is that of Nucleotide-binding protein Gura_2968 from Geotalea uraniireducens (strain Rf4) (Geobacter uraniireducens).